A 455-amino-acid chain; its full sequence is Asparagine--tRNA ligase (455 aa).

The protein belongs to the class-II aminoacyl-tRNA synthetase family. Homodimer.

Its subcellular location is the cytoplasm. The enzyme catalyses tRNA(Asn) + L-asparagine + ATP = L-asparaginyl-tRNA(Asn) + AMP + diphosphate + H(+). This is Asparagine--tRNA ligase from Mycoplasma pneumoniae (strain ATCC 29342 / M129 / Subtype 1) (Mycoplasmoides pneumoniae).